A 264-amino-acid chain; its full sequence is Phosphonoacetaldehyde hydrolase (264 aa).

Asp9 acts as the Nucleophile in catalysis. The Mg(2+) site is built by Asp9 and Ala11. The Schiff-base intermediate with substrate role is filled by Lys50. Residue Asp183 coordinates Mg(2+).

The protein belongs to the HAD-like hydrolase superfamily. PhnX family. Homodimer. It depends on Mg(2+) as a cofactor.

It carries out the reaction phosphonoacetaldehyde + H2O = acetaldehyde + phosphate + H(+). In terms of biological role, involved in phosphonate degradation. The polypeptide is Phosphonoacetaldehyde hydrolase (Bacillus cereus (strain AH820)).